Consider the following 257-residue polypeptide: Phosphonates import ATP-binding protein PhnC (257 aa).

The ABC transporter domain maps to I4–I248.

The protein belongs to the ABC transporter superfamily. Phosphonates importer (TC 3.A.1.9.1) family. As to quaternary structure, the complex is composed of two ATP-binding proteins (PhnC), two transmembrane proteins (PhnE) and a solute-binding protein (PhnD).

The protein localises to the cell membrane. The enzyme catalyses phosphonate(out) + ATP + H2O = phosphonate(in) + ADP + phosphate + H(+). Functionally, part of the ABC transporter complex PhnCDE involved in phosphonates import. Responsible for energy coupling to the transport system. In Staphylococcus epidermidis (strain ATCC 35984 / DSM 28319 / BCRC 17069 / CCUG 31568 / BM 3577 / RP62A), this protein is Phosphonates import ATP-binding protein PhnC.